Reading from the N-terminus, the 71-residue chain is Large ribosomal subunit protein bL31 (71 aa).

Residues C16, C18, C37, and C40 each contribute to the Zn(2+) site.

It belongs to the bacterial ribosomal protein bL31 family. Type A subfamily. Part of the 50S ribosomal subunit. It depends on Zn(2+) as a cofactor.

In terms of biological role, binds the 23S rRNA. This chain is Large ribosomal subunit protein bL31, found in Pseudomonas aeruginosa (strain LESB58).